Here is a 648-residue protein sequence, read N- to C-terminus: EF-hand domain-containing protein 1 (648 aa).

Positions 1–45 (MGTNPVHGLPFLPGSSFTDSTKTAFHRSQTLNYRNGYAVVRRPTM) are required for its localization in the mitotic spindle and interaction with alpha-tubulin. DM10 domains are found at residues 93–198 (DKKV…ESQG), 239–359 (DKQV…KDKF), and 416–520 (DNKV…ESNA). An EF-hand domain is found at 582-617 (SYKENLRETFQMYDKDESGYVDRETFFKICETLNVP).

In terms of assembly, microtubule inner protein component of sperm flagellar doublet microtubules. Interacts with the C-terminus of CACNA1E. Interacts with alpha-tubulin. Expressed in adult brain including hippocampus, cerebellum, cerebral cortex, thalamus, hypothalamus, amygdala and upper brainstem. Expressed in soma and dentrites of pyramidal neurons of the hippocampal CA1 region, pyramidal neurons of the cerebral cortex and Purkinje cells of cerebellum. Highly expressed in testis, trachea, and oviduct, moderately in lung, and slightly in brain. Highly expressed in sperm flagella and tracheal cilia (at protein level).

It is found in the cytoplasm. Its subcellular location is the cytoskeleton. The protein resides in the cilium axoneme. The protein localises to the flagellum axoneme. It localises to the microtubule organizing center. It is found in the centrosome. Its subcellular location is the spindle. The protein resides in the spindle pole. Functionally, microtubule inner protein (MIP) part of the dynein-decorated doublet microtubules (DMTs) in cilia axoneme, which is required for motile cilia beating. Microtubule-associated protein which regulates cell division and neuronal migration during cortical development. Necessary for radial and tangential cell migration during brain development, possibly acting as a regulator of cell morphology and process formation during migration. May enhance calcium influx through CACNA1E and stimulate programmed cell death. Overexpression of EFHC1 in hippocampal primary culture neurons induced apoptosis. The polypeptide is EF-hand domain-containing protein 1 (Efhc1) (Mus musculus (Mouse)).